Reading from the N-terminus, the 1265-residue chain is Protein FAM193A (1265 aa).

The stretch at 107 to 142 (SEDTYSTLLQRYQRSEEELRRVAEEWLECQKRIDAY) forms a coiled coil. Residues 247-272 (APDYLAERSPPSVSSASSGSGSSSPI) form a disordered region. Positions 255–271 (SPPSVSSASSGSGSSSP) are enriched in low complexity. Serine 293 carries the post-translational modification Phosphoserine. Disordered stretches follow at residues 331–407 (NGGG…EQAP), 553–586 (GSEI…SKEK), 626–674 (VQSS…APLP), 750–785 (ENGV…NQKE), 822–841 (LTKR…ERES), 859–881 (ETKP…KLEE), and 893–1163 (EHLH…DRVN). Over residues 355–365 (EADDEEADGES) the composition is skewed to acidic residues. Position 383 is a phosphoserine (serine 383). Position 642 is a phosphoserine (serine 642). Over residues 757-769 (QQDDGDESADEDS) the composition is skewed to acidic residues. Residues 772–781 (EHSSSTSTST) show a composition bias toward low complexity. Residues 868–877 (AAKRARHKQR) are compositionally biased toward basic residues. Residues 873–932 (RHKQRKLEEKARLEAEARAREHLHLQEEQRRREEEEDEEEEEDRFKEEFQRLQELQKLRA) are a coiled coil. Composition is skewed to basic and acidic residues over residues 893-905 (EHLH…RRRE) and 915-929 (DRFK…ELQK). The segment covering 931-940 (RAVKKKKKER) has biased composition (basic residues). The segment covering 953–973 (RNFQAATESVPNSGNIHNGSL) has biased composition (polar residues). Residues 1093–1118 (TEQKREERKVNSNNNNKKQLNHIKDE) adopt a coiled-coil conformation. Serine 1129 and serine 1144 each carry phosphoserine. Basic residues predominate over residues 1149–1159 (GKNKKNKKKKG).

It belongs to the FAM193 family.

This chain is Protein FAM193A (FAM193A), found in Homo sapiens (Human).